We begin with the raw amino-acid sequence, 531 residues long: Na(+)/H(+) antiporter NhaB (531 aa).

11 consecutive transmembrane segments (helical) span residues Ile-23–Trp-45, Pro-66–Leu-86, Leu-97–Phe-117, Val-130–Ile-164, Leu-206–Pro-226, Leu-244–Val-264, Ala-307–Ile-327, Glu-352–Ile-372, Leu-393–Gly-413, Ala-451–Ile-471, and Met-478–Glu-498.

It belongs to the NhaB Na(+)/H(+) (TC 2.A.34) antiporter family.

The protein localises to the cell inner membrane. The catalysed reaction is 2 Na(+)(in) + 3 H(+)(out) = 2 Na(+)(out) + 3 H(+)(in). Functionally, na(+)/H(+) antiporter that extrudes sodium in exchange for external protons. The protein is Na(+)/H(+) antiporter NhaB of Shewanella loihica (strain ATCC BAA-1088 / PV-4).